The following is a 92-amino-acid chain: Small ribosomal subunit protein uS19 (92 aa).

The protein belongs to the universal ribosomal protein uS19 family.

In terms of biological role, protein S19 forms a complex with S13 that binds strongly to the 16S ribosomal RNA. The polypeptide is Small ribosomal subunit protein uS19 (Buchnera aphidicola subsp. Schizaphis graminum (strain Sg)).